The primary structure comprises 345 residues: tRNA N6-adenosine threonylcarbamoyltransferase (345 aa).

Fe cation is bound by residues His-109 and His-113. Substrate contacts are provided by residues Thr-136–Gly-140, Asp-169, Gly-182, Asp-186, and Asn-284. Asp-312 lines the Fe cation pocket.

This sequence belongs to the KAE1 / TsaD family. Fe(2+) serves as cofactor.

Its subcellular location is the cytoplasm. It carries out the reaction L-threonylcarbamoyladenylate + adenosine(37) in tRNA = N(6)-L-threonylcarbamoyladenosine(37) in tRNA + AMP + H(+). Its function is as follows. Required for the formation of a threonylcarbamoyl group on adenosine at position 37 (t(6)A37) in tRNAs that read codons beginning with adenine. Is involved in the transfer of the threonylcarbamoyl moiety of threonylcarbamoyl-AMP (TC-AMP) to the N6 group of A37, together with TsaE and TsaB. TsaD likely plays a direct catalytic role in this reaction. The chain is tRNA N6-adenosine threonylcarbamoyltransferase from Chlorobium phaeovibrioides (strain DSM 265 / 1930) (Prosthecochloris vibrioformis (strain DSM 265)).